A 718-amino-acid polypeptide reads, in one-letter code: Catalase-peroxidase (718 aa).

The segment at residues 98–219 is a cross-link (tryptophyl-tyrosyl-methioninium (Trp-Tyr) (with M-245)); the sequence is WHAAGTYRMG…LAATEMGLIY (122 aa). His99 (proton acceptor) is an active-site residue. A cross-link (tryptophyl-tyrosyl-methioninium (Tyr-Met) (with W-98)) is located at residues 219–245; it reads YVNPEGPQASGDPRSAAPFIRATFGNM. A heme b-binding site is contributed by His260.

Belongs to the peroxidase family. Peroxidase/catalase subfamily. Homodimer or homotetramer. Heme b is required as a cofactor. Post-translationally, formation of the three residue Trp-Tyr-Met cross-link is important for the catalase, but not the peroxidase activity of the enzyme.

The enzyme catalyses H2O2 + AH2 = A + 2 H2O. It catalyses the reaction 2 H2O2 = O2 + 2 H2O. Bifunctional enzyme with both catalase and broad-spectrum peroxidase activity. The sequence is that of Catalase-peroxidase from Acinetobacter baumannii (strain AB307-0294).